Here is a 174-residue protein sequence, read N- to C-terminus: Small ribosomal subunit protein uS5 (174 aa).

One can recognise an S5 DRBM domain in the interval 16–79 (LSELLVSVRR…NAAKKSMIRV (64 aa)).

This sequence belongs to the universal ribosomal protein uS5 family. In terms of assembly, part of the 30S ribosomal subunit. Contacts proteins S4 and S8.

In terms of biological role, with S4 and S12 plays an important role in translational accuracy. Functionally, located at the back of the 30S subunit body where it stabilizes the conformation of the head with respect to the body. This Anaplasma marginale (strain Florida) protein is Small ribosomal subunit protein uS5.